We begin with the raw amino-acid sequence, 683 residues long: Leucine-rich repeat and calponin homology domain-containing protein 4 (683 aa).

Positions M1–A18 are enriched in low complexity. Residues M1–A34 form a disordered region. LRR repeat units follow at residues A41–S64, L67–L90, S92–L113, T114–L136, L138–L158, G159–L181, S182–L204, L206–L226, and R227–G250. The disordered stretch occupies residues A268–H292. S279, S281, S304, S307, S309, and S313 each carry phosphoserine. 2 disordered regions span residues F326 to P436 and S449 to D539. Composition is skewed to basic and acidic residues over residues E330–G345, I357–P376, and G384–Q418. Residues S432 and S457 each carry the phosphoserine modification. Polar residues predominate over residues S449–S460. 2 stretches are compositionally biased toward low complexity: residues S461–Q481 and S511–S524. Residues S511, S513, S517, S521, and S589 each carry the phosphoserine modification. The Calponin-homology (CH) domain occupies V534–G647. A helical membrane pass occupies residues L653–L673.

The protein localises to the cell membrane. Its function is as follows. Accessory protein that regulates signaling by multiple TLRs, acting as a broad-spanning regulator of the innate immune response. In macrophages, binds LPS and promotes proper docking of LPS in lipid raft membrane. May be required for lipid raft maintenance. The protein is Leucine-rich repeat and calponin homology domain-containing protein 4 of Homo sapiens (Human).